Reading from the N-terminus, the 114-residue chain is uncharacterized protein (114 aa).

Helical transmembrane passes span 58 to 78 (CLLG…FFLL) and 94 to 114 (SISY…FCLA).

The protein resides in the membrane. This is an uncharacterized protein from Saccharomyces cerevisiae (strain ATCC 204508 / S288c) (Baker's yeast).